Reading from the N-terminus, the 453-residue chain is Bifunctional protein GlmU (453 aa).

Residues 1–225 (MNIVILAAGT…EWETLGVNSK (225 aa)) are pyrophosphorylase. Residues 6-9 (LAAG), K20, Q71, 76-77 (GT), 98-100 (YGD), G135, E150, N165, and N223 each bind UDP-N-acetyl-alpha-D-glucosamine. Position 100 (D100) interacts with Mg(2+). N223 provides a ligand contact to Mg(2+). Positions 226-246 (AQLAELERIHQRNVADALLVD) are linker. Residues 247-453 (GVTLADPARV…GYVRPVKKKS (207 aa)) are N-acetyltransferase. Residues R329 and K347 each contribute to the UDP-N-acetyl-alpha-D-glucosamine site. H359 functions as the Proton acceptor in the catalytic mechanism. Positions 362 and 373 each coordinate UDP-N-acetyl-alpha-D-glucosamine. Acetyl-CoA-binding positions include A376, 382-383 (NY), S401, and A419.

In the N-terminal section; belongs to the N-acetylglucosamine-1-phosphate uridyltransferase family. It in the C-terminal section; belongs to the transferase hexapeptide repeat family. In terms of assembly, homotrimer. It depends on Mg(2+) as a cofactor.

The protein resides in the cytoplasm. The enzyme catalyses alpha-D-glucosamine 1-phosphate + acetyl-CoA = N-acetyl-alpha-D-glucosamine 1-phosphate + CoA + H(+). The catalysed reaction is N-acetyl-alpha-D-glucosamine 1-phosphate + UTP + H(+) = UDP-N-acetyl-alpha-D-glucosamine + diphosphate. The protein operates within nucleotide-sugar biosynthesis; UDP-N-acetyl-alpha-D-glucosamine biosynthesis; N-acetyl-alpha-D-glucosamine 1-phosphate from alpha-D-glucosamine 6-phosphate (route II): step 2/2. It participates in nucleotide-sugar biosynthesis; UDP-N-acetyl-alpha-D-glucosamine biosynthesis; UDP-N-acetyl-alpha-D-glucosamine from N-acetyl-alpha-D-glucosamine 1-phosphate: step 1/1. Its pathway is bacterial outer membrane biogenesis; LPS lipid A biosynthesis. Catalyzes the last two sequential reactions in the de novo biosynthetic pathway for UDP-N-acetylglucosamine (UDP-GlcNAc). The C-terminal domain catalyzes the transfer of acetyl group from acetyl coenzyme A to glucosamine-1-phosphate (GlcN-1-P) to produce N-acetylglucosamine-1-phosphate (GlcNAc-1-P), which is converted into UDP-GlcNAc by the transfer of uridine 5-monophosphate (from uridine 5-triphosphate), a reaction catalyzed by the N-terminal domain. This is Bifunctional protein GlmU from Burkholderia orbicola (strain MC0-3).